Consider the following 252-residue polypeptide: 5-oxoprolinase subunit A (252 aa).

It belongs to the LamB/PxpA family. Forms a complex composed of PxpA, PxpB and PxpC.

It carries out the reaction 5-oxo-L-proline + ATP + 2 H2O = L-glutamate + ADP + phosphate + H(+). Catalyzes the cleavage of 5-oxoproline to form L-glutamate coupled to the hydrolysis of ATP to ADP and inorganic phosphate. The sequence is that of 5-oxoprolinase subunit A from Photorhabdus laumondii subsp. laumondii (strain DSM 15139 / CIP 105565 / TT01) (Photorhabdus luminescens subsp. laumondii).